The sequence spans 249 residues: ATP synthase subunit a (249 aa).

The next 6 helical transmembrane spans lie at 26–46 (FTNV…FLYL), 84–104 (FFPF…IGLF), 114–134 (IIVT…YGFF), 143–163 (LFVP…IEII), 185–205 (ITLK…ALGI), and 208–228 (TVLP…VAFL).

The protein belongs to the ATPase A chain family. In terms of assembly, F-type ATPases have 2 components, CF(1) - the catalytic core - and CF(0) - the membrane proton channel. CF(1) has five subunits: alpha(3), beta(3), gamma(1), delta(1), epsilon(1). CF(0) has three main subunits: a(1), b(2) and c(9-12). The alpha and beta chains form an alternating ring which encloses part of the gamma chain. CF(1) is attached to CF(0) by a central stalk formed by the gamma and epsilon chains, while a peripheral stalk is formed by the delta and b chains.

It localises to the cell inner membrane. Its function is as follows. Key component of the proton channel; it plays a direct role in the translocation of protons across the membrane. The protein is ATP synthase subunit a of Brucella ovis (strain ATCC 25840 / 63/290 / NCTC 10512).